We begin with the raw amino-acid sequence, 195 residues long: ATP-dependent Clp protease proteolytic subunit 3 (195 aa).

The active-site Nucleophile is serine 97. Histidine 122 is an active-site residue.

This sequence belongs to the peptidase S14 family. In terms of assembly, fourteen ClpP subunits assemble into 2 heptameric rings which stack back to back to give a disk-like structure with a central cavity, resembling the structure of eukaryotic proteasomes.

Its subcellular location is the cytoplasm. It carries out the reaction Hydrolysis of proteins to small peptides in the presence of ATP and magnesium. alpha-casein is the usual test substrate. In the absence of ATP, only oligopeptides shorter than five residues are hydrolyzed (such as succinyl-Leu-Tyr-|-NHMec, and Leu-Tyr-Leu-|-Tyr-Trp, in which cleavage of the -Tyr-|-Leu- and -Tyr-|-Trp bonds also occurs).. Its function is as follows. Cleaves peptides in various proteins in a process that requires ATP hydrolysis. Has a chymotrypsin-like activity. Plays a major role in the degradation of misfolded proteins. This Rhizobium meliloti (strain 1021) (Ensifer meliloti) protein is ATP-dependent Clp protease proteolytic subunit 3.